A 184-amino-acid chain; its full sequence is Shikimate kinase (184 aa).

12–17 lines the ATP pocket; sequence GSGKST. Residue S16 coordinates Mg(2+). The substrate site is built by D34, R58, and G80. R117 is a binding site for ATP. R136 is a substrate binding site. R153 is a binding site for ATP. The tract at residues 163-184 is disordered; the sequence is MSRLDDPTPNTSPSSTASGAAT. Residues 169 to 184 show a composition bias toward low complexity; sequence PTPNTSPSSTASGAAT.

The protein belongs to the shikimate kinase family. As to quaternary structure, monomer. The cofactor is Mg(2+).

The protein localises to the cytoplasm. The catalysed reaction is shikimate + ATP = 3-phosphoshikimate + ADP + H(+). Its pathway is metabolic intermediate biosynthesis; chorismate biosynthesis; chorismate from D-erythrose 4-phosphate and phosphoenolpyruvate: step 5/7. Its function is as follows. Catalyzes the specific phosphorylation of the 3-hydroxyl group of shikimic acid using ATP as a cosubstrate. The chain is Shikimate kinase from Mycobacterium marinum (strain ATCC BAA-535 / M).